The sequence spans 101 residues: Urease subunit beta (101 aa).

It belongs to the urease beta subunit family. As to quaternary structure, heterotrimer of UreA (gamma), UreB (beta) and UreC (alpha) subunits. Three heterotrimers associate to form the active enzyme.

Its subcellular location is the cytoplasm. It carries out the reaction urea + 2 H2O + H(+) = hydrogencarbonate + 2 NH4(+). It participates in nitrogen metabolism; urea degradation; CO(2) and NH(3) from urea (urease route): step 1/1. This is Urease subunit beta from Rhodopseudomonas palustris (strain HaA2).